Here is a 190-residue protein sequence, read N- to C-terminus: COMM domain-containing protein 1 (190 aa).

The residue at position 2 (A2) is an N-acetylalanine. A sufficient for interaction with SLC12A2 region spans residues 2–123 (AAGELEGGKP…RWNSGLRGLS (122 aa)). Positions 101, 110, and 134 each coordinate Cu cation. The region spanning 118–186 (GLRGLSWRVD…EVEESISTLI (69 aa)) is the COMM domain. Residues 125–190 (RVDGKSQSRH…SISTLISQPN (66 aa)) form a required for binding to PtdIns(4,5)P2 region.

This sequence belongs to the COMM domain-containing protein 1 family. In terms of assembly, component of the commander complex consisting of the CCC subcomplex and the retriever subcomplex. Component of the CCC (COMMD/CCDC22/CCDC93) subcomplex consisting of COMMD1, COMMD2, COMMD3, COMMD4, COMMD5, COMMD6, COMMD7, COMMD8, COMMD9, COMMD10, CCDC22 and CCDC93; within the complex forms a heterodimer with COMMD6. Interacts with VPS35L; the interaction associates the CCC complex with the retriever complex. Identified in a complex with an E3 ubiquitin ligase complex composed of TCEB1/elongin C, CUL2, SOCS1 and RBX1; in the complex interacts directly with SOCS1 and CUL2. Identified in a complex with NF-kappa-B. Interacts directly with SLC12A2. Interacts directly with ATP7B (via the N-terminal region). Interacts with ATP7A. Interacts with FAM107A; this interaction stabilizes COMMD1 in the nucleus. Interacts with CCS, CDKN2A, RELA, REL, RELB, NFKB1/p105, NFKB2/p100, NFKBIB, SCNN1D, SCNN1B, CFTR, CLU, SGK1, AKT1, CUL1, CUL2, CUL3, CUL4A, CUL4B, CUL5, CUL7, HIF1A. Acetylated by EP300 ina stimuli-specific manner; protecting it from XIAP-mediated proteasomal degradation and required for interaction with RElA in response to stress. Post-translationally, ubiquitinated; undergoes both 'Lys-63'- and 'Lys-48'-linked polyubiquitination. Ubiquitinated by XIAP, leading to its proteasomal degradation. As to expression, ubiquitous. Highest expression in the liver, with lower expression in brain, lung, placenta, pancreas, small intestine, heart, skeletal muscle, kidney and placenta. Down-regulated in cancer tissues.

The protein resides in the nucleus. It is found in the cytoplasm. The protein localises to the endosome membrane. It localises to the cytoplasmic vesicle. Its subcellular location is the early endosome. The protein resides in the recycling endosome. In terms of biological role, scaffold protein in the commander complex that is essential for endosomal recycling of transmembrane cargos; the commander complex is composed of the CCC subcomplex and the retriever subcomplex. Can modulate activity of cullin-RING E3 ubiquitin ligase (CRL) complexes by displacing CAND1; in vitro promotes CRL E3 activity and dissociates CAND1 from CUL1 and CUL2. Promotes ubiquitination of NF-kappa-B subunit RELA and its subsequent proteasomal degradation. Down-regulates NF-kappa-B activity. Involved in the regulation of membrane expression and ubiquitination of SLC12A2. Modulates Na(+) transport in epithelial cells by regulation of apical cell surface expression of amiloride-sensitive sodium channel (ENaC) subunits and by promoting their ubiquitination presumably involving NEDD4L. Promotes the localization of SCNN1D to recycling endosomes. Promotes CFTR cell surface expression through regulation of its ubiquitination. Down-regulates SOD1 activity by interfering with its homodimerization. Plays a role in copper ion homeostasis. Involved in copper-dependent ATP7A trafficking between the trans-Golgi network and vesicles in the cell periphery; the function is proposed to depend on its association within the CCC complex and cooperation with the WASH complex on early endosomes. Can bind one copper ion per monomer. May function to facilitate biliary copper excretion within hepatocytes. Binds to phosphatidylinositol 4,5-bisphosphate (PtdIns(4,5)P2). Involved in the regulation of HIF1A-mediated transcription; competes with ARNT/Hif-1-beta for binding to HIF1A resulting in decreased DNA binding and impaired transcriptional activation by HIF-1. Negatively regulates neuroblastoma G1/S phase cell cycle progression and cell proliferation by stimulating ubiquitination of NF-kappa-B subunit RELA and NF-kappa-B degradation in a FAM107A- and actin-dependent manner. The protein is COMM domain-containing protein 1 (COMMD1) of Homo sapiens (Human).